Reading from the N-terminus, the 288-residue chain is Glandicoline B O-methyltransferase roqN (288 aa).

Residues T57, D82, and 109–110 (DA) contribute to the S-adenosyl-L-methionine site.

This sequence belongs to the class I-like SAM-binding methyltransferase superfamily.

It catalyses the reaction glandicoline B + S-adenosyl-L-methionine = meleagrin + S-adenosyl-L-homocysteine + H(+). The protein operates within alkaloid biosynthesis. Its function is as follows. Glandicoline B O-methyltransferase; part of the gene cluster that mediates the biosynthesis of the mycotoxin meleagrin. The first stage is catalyzed by the dipeptide synthase roqA which condenses histidine and tryptophan to produce histidyltryptophanyldiketopiperazine (HTD). HTD is then converted to roquefortine C through two possible pathways. In the first pathway, prenyltransferase roqD transforms HTD to the intermediate roquefortine D, which is in turn converted to roquefortine C by the cytochrome P450 monooxygenase roqR. In the second pathway, HTD is first converted to the intermediate dehydrohistidyltryptophanyldi-ketopiperazine (DHTD) by roqR which is then prenylated by roqD to form roquefortine C. Roquefortine C can be further transformed to meleagrin via three more reactions including oxydation to glandicolin A by roqM, which is further reduced to glandicoline B by roqO. Finally, glandicoline B is converted to meleagrin by the glandicoline B O-methyltransferase roqN. More studies identified further branching and additional metabolites produced by the roquefortine/meleagrin cluster, including roquefortine F, roquefortine L, roquefortine M, roquefortine N and neoxaline. The protein is Glandicoline B O-methyltransferase roqN of Penicillium rubens (strain ATCC 28089 / DSM 1075 / NRRL 1951 / Wisconsin 54-1255) (Penicillium chrysogenum).